The primary structure comprises 199 residues: Glycerol-3-phosphate acyltransferase (199 aa).

A run of 5 helical transmembrane segments spans residues 5–25 (AYLL…IIFC), 54–74 (AAIG…LIAF), 82–102 (AIGL…FFQF), 114–134 (VFFS…LIVF), and 154–174 (YIWC…CLLI).

Belongs to the PlsY family. As to quaternary structure, probably interacts with PlsX.

Its subcellular location is the cell inner membrane. The enzyme catalyses an acyl phosphate + sn-glycerol 3-phosphate = a 1-acyl-sn-glycero-3-phosphate + phosphate. It functions in the pathway lipid metabolism; phospholipid metabolism. Functionally, catalyzes the transfer of an acyl group from acyl-phosphate (acyl-PO(4)) to glycerol-3-phosphate (G3P) to form lysophosphatidic acid (LPA). This enzyme utilizes acyl-phosphate as fatty acyl donor, but not acyl-CoA or acyl-ACP. The sequence is that of Glycerol-3-phosphate acyltransferase from Haemophilus ducreyi (strain 35000HP / ATCC 700724).